Consider the following 101-residue polypeptide: MHCDIYRSSKKDEMYIYIARPNYPDETEQADPFEKVPEAVLQAFGRATFVMHLELAPTRKLARVNVLHVLDSLQTKGFFIQMPPEGLINPNAVEPEGLRGA.

The YcgL domain maps to 1 to 92 (MHCDIYRSSK…PPEGLINPNA (92 aa)).

The sequence is that of YcgL domain-containing protein ABBFA_001807 from Acinetobacter baumannii (strain AB307-0294).